The chain runs to 197 residues: Imidazoleglycerol-phosphate dehydratase (197 aa).

This sequence belongs to the imidazoleglycerol-phosphate dehydratase family.

The protein resides in the cytoplasm. The enzyme catalyses D-erythro-1-(imidazol-4-yl)glycerol 3-phosphate = 3-(imidazol-4-yl)-2-oxopropyl phosphate + H2O. The protein operates within amino-acid biosynthesis; L-histidine biosynthesis; L-histidine from 5-phospho-alpha-D-ribose 1-diphosphate: step 6/9. This chain is Imidazoleglycerol-phosphate dehydratase, found in Rhodopseudomonas palustris (strain BisA53).